A 4555-amino-acid chain; its full sequence is Protocadherin Fat 3 (4555 aa).

The signal sequence occupies residues 1–31; sequence MGVTMRHCIDTRPPSCLIFLLLKLCATVSQG. Topologically, residues 32–4153 are extracellular; the sequence is LPGTGPLGFH…AGHSYVGKEE (4122 aa). Cadherin domains lie at 43 to 157, 158 to 265, 263 to 374, 376 to 471, 472 to 577, 578 to 680, 726 to 830, 831 to 935, 936 to 1042, 1043 to 1147, 1148 to 1253, 1254 to 1358, 1362 to 1459, 1460 to 1565, 1566 to 1768, 1769 to 1882, 1883 to 1985, 1982 to 2083, 2084 to 2185, 2186 to 2286, 2287 to 2393, 2394 to 2495, 2496 to 2599, 2600 to 2707, 2708 to 2813, 2814 to 2923, 2924 to 3028, 3029 to 3130, 3131 to 3235, 3236 to 3340, 3341 to 3445, 3446 to 3550, and 3551 to 3652; these read THAL…RPLF, SPTT…APII, PIIH…TPIK, EKDV…TPEF, QETL…SPLF, EKVA…SKSF, KSFP…SPVF, LQDS…SPAF, IPSS…TPYF, PDFA…APLT, SEPI…KPQF, PEKV…SPIP, DEPF…GPEF, SQPH…SPYF, TNPL…PPVF, LFSQ…PPVF, TQAV…TQSF, TQSF…SPVF, VGLP…MPVF, DKPF…PPVF, DQPT…PPVF, NQLI…SPAF, SQST…APQF, MTLE…LPSF, TQSQ…KPVF, ETSS…APVF, AHEV…SPVC, DQVA…PPVF, SSNH…PPVF, ERRD…PPRF, SQDV…SPVF, TPAN…KPTA, and IPLE…TIRF. N-linked (GlcNAc...) asparagine glycosylation occurs at Asn-48. N-linked (GlcNAc...) asparagine glycosylation occurs at Asn-341. Asn-481, Asn-562, Asn-667, Asn-799, Asn-879, Asn-898, and Asn-1006 each carry an N-linked (GlcNAc...) asparagine glycan. Residues Asn-1367 and Asn-1429 are each glycosylated (N-linked (GlcNAc...) asparagine). N-linked (GlcNAc...) asparagine glycosylation occurs at Asn-1751. Asn-1944, Asn-1993, and Asn-1996 each carry an N-linked (GlcNAc...) asparagine glycan. Residues Asn-2208, Asn-2292, Asn-2331, and Asn-2467 are each glycosylated (N-linked (GlcNAc...) asparagine). N-linked (GlcNAc...) asparagine glycosylation is present at Asn-2734. Asn-3000 is a glycosylation site (N-linked (GlcNAc...) asparagine). Asn-3201 carries N-linked (GlcNAc...) asparagine glycosylation. N-linked (GlcNAc...) asparagine glycosylation is found at Asn-3449, Asn-3618, and Asn-3741. Positions 3794-3832 constitute an EGF-like 1 domain; the sequence is SNDPCVEKPCPEDMQCVGYEASRRPFLCQCPPGKLGECS. Disulfide bonds link Cys-3798–Cys-3809, Cys-3803–Cys-3821, and Cys-3823–Cys-3831. The region spanning 3834 to 4017 is the Laminin G-like domain; it reads HTSLSFAGNS…VGLTELKLGC (184 aa). Asn-3926 carries an N-linked (GlcNAc...) asparagine glycan. 10 disulfide bridges follow: Cys-3984-Cys-4017, Cys-4024-Cys-4035, Cys-4029-Cys-4045, Cys-4047-Cys-4056, Cys-4063-Cys-4074, Cys-4068-Cys-4083, Cys-4085-Cys-4094, Cys-4101-Cys-4112, Cys-4106-Cys-4121, and Cys-4123-Cys-4132. EGF-like domains are found at residues 4020-4057 and 4059-4095; these read YPDA…TNCE and EITA…VTCE. One can recognise an EGF-like 4; calcium-binding domain in the interval 4097 to 4133; that stretch reads DVDECEREECENGGSCVNLFGSFFCNCTPGYVGQYCG. The chain crosses the membrane as a helical span at residues 4154–4174; the sequence is LIGIAVVLFVIFTLIVLFIVF. Over 4175-4555 the chain is Cytoplasmic; the sequence is RKKVFRKNYS…FVETQHQTQV (381 aa). Positions 4326–4343 are enriched in polar residues; the sequence is SNKGSNSEVQSLNSFQSD. Disordered stretches follow at residues 4326–4347, 4395–4424, and 4452–4472; these read SNKG…SGDD, GGYD…LPED, and PRFH…TDLG. Omega-N-methylarginine is present on residues Arg-4508 and Arg-4518.

In terms of tissue distribution, restricted to the nervous system. Abundantly expressed in the fetal brain.

The protein localises to the membrane. In terms of biological role, may play a role in the interactions between neurites derived from specific subsets of neurons during development. This is Protocadherin Fat 3 (Fat3) from Rattus norvegicus (Rat).